The primary structure comprises 504 residues: L-carnitine/gamma-butyrobetaine antiporter (504 aa).

Helical transmembrane passes span 10–30 (IEPK…WLTV), 51–71 (WGWA…WLVF), 92–112 (IFMM…SIEI), 143–163 (GPLP…FFFV), 195–215 (FYLV…TPLV), 231–251 (LDAI…ACGL), 263–283 (SYLS…SFIM), 316–336 (WTVF…IFLA), 347–367 (LCFG…TVLG), 403–423 (LSTA…VTLI), 446–466 (LLVR…LLAL), and 475–495 (AIIA…LSFI).

The protein belongs to the BCCT transporter (TC 2.A.15) family. CaiT subfamily. Homotrimer.

It is found in the cell inner membrane. The enzyme catalyses 4-(trimethylamino)butanoate(in) + (R)-carnitine(out) = 4-(trimethylamino)butanoate(out) + (R)-carnitine(in). Its pathway is amine and polyamine metabolism; carnitine metabolism. In terms of biological role, catalyzes the exchange of L-carnitine for gamma-butyrobetaine. This is L-carnitine/gamma-butyrobetaine antiporter from Escherichia fergusonii (strain ATCC 35469 / DSM 13698 / CCUG 18766 / IAM 14443 / JCM 21226 / LMG 7866 / NBRC 102419 / NCTC 12128 / CDC 0568-73).